Reading from the N-terminus, the 290-residue chain is Ribosomal RNA small subunit methyltransferase H (290 aa).

S-adenosyl-L-methionine-binding positions include 35–37, aspartate 54, phenylalanine 81, aspartate 97, and glutamine 104; that span reads GGH.

This sequence belongs to the methyltransferase superfamily. RsmH family.

Its subcellular location is the cytoplasm. It carries out the reaction cytidine(1402) in 16S rRNA + S-adenosyl-L-methionine = N(4)-methylcytidine(1402) in 16S rRNA + S-adenosyl-L-homocysteine + H(+). Functionally, specifically methylates the N4 position of cytidine in position 1402 (C1402) of 16S rRNA. In Picosynechococcus sp. (strain ATCC 27264 / PCC 7002 / PR-6) (Agmenellum quadruplicatum), this protein is Ribosomal RNA small subunit methyltransferase H.